The following is a 242-amino-acid chain: 3-deoxy-manno-octulosonate cytidylyltransferase (242 aa).

Belongs to the KdsB family.

The protein localises to the cytoplasm. It carries out the reaction 3-deoxy-alpha-D-manno-oct-2-ulosonate + CTP = CMP-3-deoxy-beta-D-manno-octulosonate + diphosphate. The protein operates within nucleotide-sugar biosynthesis; CMP-3-deoxy-D-manno-octulosonate biosynthesis; CMP-3-deoxy-D-manno-octulosonate from 3-deoxy-D-manno-octulosonate and CTP: step 1/1. It functions in the pathway bacterial outer membrane biogenesis; lipopolysaccharide biosynthesis. Its function is as follows. Activates KDO (a required 8-carbon sugar) for incorporation into bacterial lipopolysaccharide in Gram-negative bacteria. This Anaeromyxobacter sp. (strain K) protein is 3-deoxy-manno-octulosonate cytidylyltransferase.